Here is a 389-residue protein sequence, read N- to C-terminus: Cellobiose 2-epimerase (389 aa).

It belongs to the cellobiose 2-epimerase family.

It is found in the cytoplasm. The enzyme catalyses D-cellobiose = beta-D-glucosyl-(1-&gt;4)-D-mannopyranose. With respect to regulation, enhanced by Mg(2+) and Ca(2+) ions, ethylenediaminetetraacetic acid, ethylene glycol tetraacetic acid and citrate. Inhibited by Al(3+), Fe(3+), Co(2+), Cu(2+), Zn(2+), Pb(2+) and Ag(+) ions, iodoacetate, 4-chloromercuribenzoate and N-bromosuccinimide. In terms of biological role, catalyzes the reversible epimerization of cellobiose to 4-O-beta-D-glucopyranosyl-D-mannose (Glc-Man). Can also epimerize cellotriose to Glc-Glc-Man, cellotetraose to Glc-Glc-Glc-Man, and lactose to epilactose. This chain is Cellobiose 2-epimerase (ce-ne1), found in Ruminococcus albus.